The primary structure comprises 544 residues: Phosphoacetylglucosamine mutase (544 aa).

Serine 66 (phosphoserine intermediate) is an active-site residue. Mg(2+) is bound by residues serine 66, aspartate 290, aspartate 292, and aspartate 294. Residues 387–389 (EAN), 512–516 (RASGT), and arginine 521 contribute to the substrate site.

The protein belongs to the phosphohexose mutase family. Requires Mg(2+) as cofactor.

It carries out the reaction N-acetyl-alpha-D-glucosamine 1-phosphate = N-acetyl-D-glucosamine 6-phosphate. It functions in the pathway nucleotide-sugar biosynthesis; UDP-N-acetyl-alpha-D-glucosamine biosynthesis; N-acetyl-alpha-D-glucosamine 1-phosphate from alpha-D-glucosamine 6-phosphate (route I): step 2/2. Functionally, catalyzes the conversion of GlcNAc-6-P into GlcNAc-1-P during the synthesis of uridine diphosphate/UDP-GlcNAc, which is a biosynthetic precursor of chitin and also supplies the amino sugars for N-linked oligosaccharides of glycoproteins. The protein is Phosphoacetylglucosamine mutase of Candida albicans (Yeast).